Reading from the N-terminus, the 323-residue chain is Ubiquinone biosynthesis protein COQ4, mitochondrial (323 aa).

The Zn(2+) site is built by histidine 205, aspartate 206, histidine 209, and glutamate 221.

It belongs to the COQ4 family. In terms of assembly, component of a multi-subunit COQ enzyme complex, composed of at least COQ3, COQ4, COQ5, COQ6, COQ7 and COQ9. The cofactor is Zn(2+).

It localises to the mitochondrion inner membrane. It catalyses the reaction a 4-hydroxy-3-methoxy-5-(all-trans-polyprenyl)benzoate + H(+) = a 2-methoxy-6-(all-trans-polyprenyl)phenol + CO2. It participates in cofactor biosynthesis; ubiquinone biosynthesis. Functionally, lyase that catalyzes the C1-decarboxylation of 4-hydroxy-3-methoxy-5-(all-trans-polyprenyl)benzoic acid into 2-methoxy-6-(all-trans-polyprenyl)phenol during ubiquinone biosynthesis. In Candida albicans (strain SC5314 / ATCC MYA-2876) (Yeast), this protein is Ubiquinone biosynthesis protein COQ4, mitochondrial.